The primary structure comprises 285 residues: Probable cobalamin biosynthesis protein CobD (285 aa).

4 helical membrane-spanning segments follow: residues 10–32 (LIDLMFGEPPAIIHPVVGFGKVI), 45–67 (YLDFLVGAISSLVVIGLAFILSH), 145–167 (VIAPLFYYLIFGLPGAVVYRAVN), and 266–283 (VYWIIVVEFLLIVAIILY).

Belongs to the CobD/CbiB family.

The protein resides in the cell membrane. It participates in cofactor biosynthesis; adenosylcobalamin biosynthesis. Functionally, converts cobyric acid to cobinamide by the addition of aminopropanol on the F carboxylic group. This is Probable cobalamin biosynthesis protein CobD from Pyrococcus furiosus (strain ATCC 43587 / DSM 3638 / JCM 8422 / Vc1).